The chain runs to 399 residues: Ras-related GTP-binding protein C (399 aa).

The segment at 1–20 (MSLQYGAEETPLAGSYGAAD) is disordered. Serine 2 carries the N-acetylserine modification. Phosphoserine occurs at positions 2 and 15. GDP-binding residues include arginine 71, serine 72, glycine 73, lysine 74, serine 75, serine 76, threonine 90, glutamate 94, threonine 96, histidine 178, lysine 179, aspartate 181, serine 219, and isoleucine 220. Lysine 74 serves as a coordination point for GTP. Threonine 90 contacts GTP. Threonine 96 lines the GTP pocket. Threonine 96 is subject to Phosphothreonine. Aspartate 181 is a GTP binding site.

It belongs to the GTR/RAG GTP-binding protein family. Forms a heterodimer with RRAGA, in a sequence-independent manner, and RRAGB. Heterodimerization stabilizes proteins of the heterodimer. The GDP-bound form of RRAGC (in complex with the GTP-bound form of RRAGA or RRAGB), interacts with RPTOR, thereby promoting recruitment of mTORC1 to the lysosomes. Component of the lysosomal folliculin complex (LFC), composed of FLCN, FNIP1 (or FNIP2), RagA/RRAGA or RagB/RRAGB GDP-bound, RagC/RRAGC or RagD/RRAGD GTP-bound, and Ragulator. Interacts with NOL8. Interacts with SH3BP4; the interaction with this negative regulator is most probably direct, preferentially occurs with the inactive GDP-bound form of RRAGB, is negatively regulated by amino acids and prevents interaction with RPTOR. The Rag heterodimer interacts with SLC38A9; the probable amino acid sensor. Interacts with SESN1, SESN2 and SESN3. Interacts with PIP4P1. The Rag heterodimer interacts with the Ragulator complex. The GDP-bound form interacts with TFEB. The GDP-bound form interacts with TFE3.

Its subcellular location is the cytoplasm. It is found in the nucleus. The protein resides in the lysosome membrane. It catalyses the reaction GTP + H2O = GDP + phosphate + H(+). Its activity is regulated as follows. The activation of RagC/RRAGC is mediated by a GTPase activating protein (GAP). In high-amino acid conditions, activated by GTPase activating protein FLCN that stimulates RRAGC GTPase activity to turn it into its active GDP-bound form. In response to amino acid depletion, the GATOR1 complex inactivates RagC/RRAGC by securing the GTP-bound inactive form. Guanine nucleotide-binding protein that plays a crucial role in the cellular response to amino acid availability through regulation of the mTORC1 signaling cascade. Forms heterodimeric Rag complexes with RagA/RRAGA or RagB/RRAGB and cycles between an inactive GTP-bound and an active GDP-bound form: RagC/RRAGC is in its active form when GDP-bound RagC/RRAGC forms a complex with GTP-bound RagA/RRAGA (or RagB/RRAGB) and in an inactive form when GTP-bound RagC/RRAGC heterodimerizes with GDP-bound RagA/RRAGA (or RagB/RRAGB). In its GDP-bound active form, promotes the recruitment of mTORC1 to the lysosomes and its subsequent activation by the GTPase RHEB. This is a crucial step in the activation of the MTOR signaling cascade by amino acids. Also plays a central role in the non-canonical mTORC1 complex, which acts independently of RHEB and specifically mediates phosphorylation of MiT/TFE factors TFEB and TFE3: GDP-bound RagC/RRAGC mediates recruitment of MiT/TFE factors TFEB and TFE3. The protein is Ras-related GTP-binding protein C of Homo sapiens (Human).